We begin with the raw amino-acid sequence, 342 residues long: C-X-C chemokine receptor type 6 (342 aa).

Topologically, residues 1–32 (MAEHDYHEDYGLNSFNDSSQEEHQDFLQFRKV) are extracellular. Asparagine 16 carries an N-linked (GlcNAc...) asparagine glycan. The helical transmembrane segment at 33-59 (FLPCMYLVVFVCGLVGNSLVLVISIFY) threads the bilayer. Over 60 to 68 (HKLQSLTDV) the chain is Cytoplasmic. The chain crosses the membrane as a helical span at residues 69 to 89 (FLVNLPLADLVFVCTLPFWAY). Residues 90 to 103 (AGIHEWIFGQVMCK) lie on the Extracellular side of the membrane. A disulfide bond links cysteine 102 and cysteine 180. A helical membrane pass occupies residues 104–125 (TLLGVYTINFYTSMLILTCITV). The Cytoplasmic portion of the chain corresponds to 126–143 (DRFIVVVKATKAYNQQAK). The helical transmembrane segment at 144 to 164 (RMTWGKVICLLIWVISLLVSL) threads the bilayer. The Extracellular portion of the chain corresponds to 165–187 (PQIIYGNVFNLDKLICGYHDKEI). The helical transmembrane segment at 188 to 215 (STVVLATQMTLGFFLPLLAMIVCYSVII) threads the bilayer. The Cytoplasmic portion of the chain corresponds to 216-231 (KTLLHAGGFQKHRSLK). Residues 232 to 259 (IIFLVMAVFLLTQTPFNLVKLIRSTHWE) traverse the membrane as a helical segment. Residues 260–275 (YYAMTSFHYTIIVTEA) lie on the Extracellular side of the membrane. A helical membrane pass occupies residues 276–293 (IAYLRACLNPVLYAFVSL). Over 294–342 (KFRKNFWKLVKDIGCLPYLGVSHQWKSSEDNSKTFSASHNVEATSMFQL) the chain is Cytoplasmic.

This sequence belongs to the G-protein coupled receptor 1 family.

Its subcellular location is the cell membrane. In terms of biological role, receptor for the C-X-C chemokine CXCL16. Used as a coreceptor by SIVs and by strains of HIV-2 and m-tropic HIV-1. The chain is C-X-C chemokine receptor type 6 (CXCR6) from Macaca nemestrina (Pig-tailed macaque).